We begin with the raw amino-acid sequence, 103 residues long: uncharacterized protein (103 aa).

The chain crosses the membrane as a helical span at residues 35–57; it reads PFVSMFQTFLEVLTATVLAFTAY.

It localises to the host membrane. This is an uncharacterized protein from Acidianus bottle-shaped virus (isolate Italy/Pozzuoli) (ABV).